A 284-amino-acid chain; its full sequence is Diaminopimelate epimerase (284 aa).

Residues N13 and N70 each contribute to the substrate site. The active-site Proton donor is the C79. Substrate-binding positions include 80 to 81 (GN), N167, N200, and 218 to 219 (ER). C227 acts as the Proton acceptor in catalysis. 228 to 229 (GT) contacts substrate.

Belongs to the diaminopimelate epimerase family. Homodimer.

It localises to the cytoplasm. It carries out the reaction (2S,6S)-2,6-diaminopimelate = meso-2,6-diaminopimelate. The protein operates within amino-acid biosynthesis; L-lysine biosynthesis via DAP pathway; DL-2,6-diaminopimelate from LL-2,6-diaminopimelate: step 1/1. Its function is as follows. Catalyzes the stereoinversion of LL-2,6-diaminopimelate (L,L-DAP) to meso-diaminopimelate (meso-DAP), a precursor of L-lysine and an essential component of the bacterial peptidoglycan. This chain is Diaminopimelate epimerase, found in Prochlorococcus marinus (strain NATL1A).